A 172-amino-acid chain; its full sequence is Large ribosomal subunit protein uL10 (172 aa).

Belongs to the universal ribosomal protein uL10 family. As to quaternary structure, part of the ribosomal stalk of the 50S ribosomal subunit. The N-terminus interacts with L11 and the large rRNA to form the base of the stalk. The C-terminus forms an elongated spine to which L12 dimers bind in a sequential fashion forming a multimeric L10(L12)X complex.

Functionally, forms part of the ribosomal stalk, playing a central role in the interaction of the ribosome with GTP-bound translation factors. In Macrococcus caseolyticus (strain JCSC5402) (Macrococcoides caseolyticum), this protein is Large ribosomal subunit protein uL10.